The primary structure comprises 366 residues: tRNA(Met) cytidine acetate ligase (366 aa).

ATP contacts are provided by residues 7–20, G96, N152, and R175; that span reads IAEFNPFHYGHQYL.

The protein belongs to the TmcAL family.

It localises to the cytoplasm. The catalysed reaction is cytidine(34) in elongator tRNA(Met) + acetate + ATP = N(4)-acetylcytidine(34) in elongator tRNA(Met) + AMP + diphosphate. Its function is as follows. Catalyzes the formation of N(4)-acetylcytidine (ac(4)C) at the wobble position of elongator tRNA(Met), using acetate and ATP as substrates. First activates an acetate ion to form acetyladenylate (Ac-AMP) and then transfers the acetyl group to tRNA to form ac(4)C34. The protein is tRNA(Met) cytidine acetate ligase of Streptococcus equi subsp. zooepidemicus (strain H70).